Consider the following 172-residue polypeptide: Putative defense protein (172 aa).

The signal sequence occupies residues 1-21 (MKLVVAAVLAMAASRWRRLSA). The 151-residue stretch at 22 to 172 (HGQVPSSTCA…LRQLDNAVAA (151 aa)) folds into the Reelin domain.

The protein belongs to the insect defense protein family. In adults, in hemolymph.

Its subcellular location is the secreted. May have antimicrobial activity. In Locusta migratoria (Migratory locust), this protein is Putative defense protein.